Reading from the N-terminus, the 47-residue chain is Photosystem II reaction center protein K (47 aa).

Positions 1–10 (MAVYTLDLLA) are excised as a propeptide. The chain crosses the membrane as a helical span at residues 19-39 (FGPLIDILPIIPLFFLLLAFV).

This sequence belongs to the PsbK family. In terms of assembly, PSII is composed of 1 copy each of membrane proteins PsbA, PsbB, PsbC, PsbD, PsbE, PsbF, PsbH, PsbI, PsbJ, PsbK, PsbL, PsbM, PsbT, PsbX, PsbY, PsbZ, Psb30/Ycf12, peripheral proteins PsbO, CyanoQ (PsbQ), PsbU, PsbV and a large number of cofactors. It forms dimeric complexes.

The protein resides in the cellular thylakoid membrane. Its function is as follows. One of the components of the core complex of photosystem II (PSII). PSII is a light-driven water:plastoquinone oxidoreductase that uses light energy to abstract electrons from H(2)O, generating O(2) and a proton gradient subsequently used for ATP formation. It consists of a core antenna complex that captures photons, and an electron transfer chain that converts photonic excitation into a charge separation. This chain is Photosystem II reaction center protein K, found in Synechococcus sp. (strain CC9311).